The primary structure comprises 521 residues: Cyclic AMP-responsive element-binding protein 3-like protein 2 (521 aa).

Over 1-378 (MEVLESGEQS…CKLAGTQTGT (378 aa)) the chain is Cytoplasmic. The residue at position 93 (S93) is a Phosphoserine. K178 is covalently cross-linked (Glycyl lysine isopeptide (Lys-Gly) (interchain with G-Cter in SUMO2)). S191 is subject to Phosphoserine. The interval 196-264 (SVDQLHLPPT…PHKLQGSGPL (69 aa)) is disordered. The span at 208 to 220 (SSHSSDSEGSLSP) shows a compositional bias: low complexity. In terms of domain architecture, bZIP spans 294–357 (ALKKIRRKIK…RTLLQQLQKL (64 aa)). Residues 296–325 (KKIRRKIKNKISAQESRRKKKEYMDSLEKK) are basic motif. The segment at 336-357 (LRKKVEVLENTNRTLLQQLQKL) is leucine-zipper. A helical; Signal-anchor for type II membrane protein membrane pass occupies residues 379–399 (CLMVVVLCFAVAFGSLFQGYG). Over 400–521 (LYPSATKMAL…ELERRVNATF (122 aa)) the chain is Lumenal. An S1P recognition motif is present at residues 427 to 430 (RNLL). N-linked (GlcNAc...) asparagine glycans are attached at residues N505 and N518.

Belongs to the bZIP family. ATF subfamily. Binds DNA as a dimer. Upon ER stress, translocated to the Golgi apparatus, where it is processed by regulated intramembrane proteolysis (RIP) to release the cytosol-facing N-terminal transcription factor domain. The cleavage is performed sequentially by site-1 and site-2 proteases (S1P/MBTPS1 and S2P/MBTPS2). In terms of processing, N-glycosylated. Post-translationally, ubiquitinated by HRD1/SYVN1; undergoes 'Lys-48'-linked ubiquitination, followed by rapid proteasomal degradation under normal conditions. Upon ER stress, SYVN1 E3 ubiquitin-protein ligase dissociates from its substrate, ubiquitination does not occur and CREB3L2 is stabilized.

The protein localises to the endoplasmic reticulum membrane. Its subcellular location is the nucleus. Its function is as follows. Transcription factor involved in unfolded protein response (UPR). In the absence of endoplasmic reticulum (ER) stress, inserted into ER membranes, with N-terminal DNA-binding and transcription activation domains oriented toward the cytosolic face of the membrane. In response to ER stress, transported to the Golgi, where it is cleaved in a site-specific manner by resident proteases S1P/MBTPS1 and S2P/MBTPS2. The released N-terminal cytosolic domain is translocated to the nucleus to effect transcription of specific target genes. Plays a critical role in chondrogenesis by activating the transcription of SEC23A, which promotes the transport and secretion of cartilage matrix proteins, and possibly that of ER biogenesis-related genes. In a neuroblastoma cell line, protects cells from ER stress-induced death. In vitro activates transcription of target genes via direct binding to the CRE site. This Rattus norvegicus (Rat) protein is Cyclic AMP-responsive element-binding protein 3-like protein 2 (Creb3l2).